The chain runs to 123 residues: MRTRVMAGLCVALVVMCLYMPQPCEAQYEALVASILGKLSGLWHSDTVDFMGHTCHIRRKPKFRKFKLYHEGKFWCPGWTHLEGNSRTKSRSGSTREATKDFVHKALQNKLITKNSADAWLKG.

A signal peptide spans 1-26 (MRTRVMAGLCVALVVMCLYMPQPCEA). C55 and C76 are disulfide-bonded.

Strong expression in hemocytes, heart and muscle, with weaker expression detected in gills and hepatopancreas. No expression detected in eyes.

It is found in the secreted. Functionally, binds to bacterial LPS and may specifically inhibit the LPS-mediated activation of the hemolymph coagulation. It has a strong antibacterial effect especially on the growth of Gram-negative bacteria. This Scylla serrata (Mud crab) protein is Anti-lipopolysaccharide factor.